The chain runs to 117 residues: UPF0122 protein Teth39_1278 (117 aa).

This sequence belongs to the UPF0122 family.

Its function is as follows. Might take part in the signal recognition particle (SRP) pathway. This is inferred from the conservation of its genetic proximity to ftsY/ffh. May be a regulatory protein. In Thermoanaerobacter pseudethanolicus (strain ATCC 33223 / 39E) (Clostridium thermohydrosulfuricum), this protein is UPF0122 protein Teth39_1278.